The sequence spans 654 residues: Translation factor GUF1, mitochondrial (654 aa).

The tr-type G domain occupies 57-237; that stretch reads ENYRNFSIVA…SVIKNIPSPV (181 aa). GTP is bound by residues 66–73, 130–134, and 184–187; these read AHVDHGKS, DTPGH, and NKID.

This sequence belongs to the TRAFAC class translation factor GTPase superfamily. Classic translation factor GTPase family. LepA subfamily.

The protein resides in the mitochondrion inner membrane. It catalyses the reaction GTP + H2O = GDP + phosphate + H(+). Promotes mitochondrial protein synthesis. May act as a fidelity factor of the translation reaction, by catalyzing a one-codon backward translocation of tRNAs on improperly translocated ribosomes. Binds to mitochondrial ribosomes in a GTP-dependent manner. The polypeptide is Translation factor GUF1, mitochondrial (Candida dubliniensis (strain CD36 / ATCC MYA-646 / CBS 7987 / NCPF 3949 / NRRL Y-17841) (Yeast)).